The following is a 168-amino-acid chain: MDIKEHAEEVWFIVMLVLVLIFFSWNVYYLSTGKSFSLDYGLPTYSGLPEQAQKAVQYFDSHPPSPGQYSEVINGMLVVNLTATQYKWTPDLIVVNKSEPVVLIINSPQVDTGFYLRTPDGVINLNNVAGITSYAYFVINQPGNYTWRDAEYAGYNSSYMTGTVEVVG.

A helical membrane pass occupies residues 9–31 (EVWFIVMLVLVLIFFSWNVYYLS).

It belongs to the cytochrome c oxidase subunit 2 family.

It localises to the cell membrane. It carries out the reaction 2 a quinol + O2 = 2 a quinone + 2 H2O. Its function is as follows. The terminal oxidase is the component of the respiratory chain that catalyzes the reduction of oxygen to water. Subunits 1-3 form the functional core of the enzyme complex. In terms of biological role, subunit 2 transfers the electrons from caldariella quinol to the bimetallic center of the catalytic subunit 1 that is formed by heme A3 and Cu(B). This is Quinol oxidase subunit 2 (soxA) from Sulfolobus acidocaldarius (strain ATCC 33909 / DSM 639 / JCM 8929 / NBRC 15157 / NCIMB 11770).